The primary structure comprises 213 residues: MFITFEGMDGSGKTTALLKVKEELERLNYKVLITREPGGEVIAEQIRQIILDNKNKDMDAWTEALLFIASRNQHLQKVIKPALEKNIIVISDRFIDSTSAYQGSARNIGVDVVSEVQQIVLKNCLPDLTLFFDVSFSEAEKRMQIRGESSKNRLDKEENNFKQKVYQGYLELVKNNPKRIKVIDANKDIDQVYNQAIKIILEKLKENEKRTSN.

7–14 (GMDGSGKT) contacts ATP.

It belongs to the thymidylate kinase family.

The enzyme catalyses dTMP + ATP = dTDP + ADP. Functionally, phosphorylation of dTMP to form dTDP in both de novo and salvage pathways of dTTP synthesis. The sequence is that of Thymidylate kinase from Mycoplasma capricolum subsp. capricolum (strain California kid / ATCC 27343 / NCTC 10154).